We begin with the raw amino-acid sequence, 1787 residues long: ATP-dependent RNA helicase DEAH11, chloroplastic (1787 aa).

A chloroplast-targeting transit peptide spans 1–33; it reads MRNSFPPSDGGRSTTDRRQQSFPSSSTNRYNSR. Positions 1–75 are disordered; it reads MRNSFPPSDG…DRAPSSGFSP (75 aa). A compositionally biased stretch (polar residues) spans 20–60; the sequence is QSFPSSSTNRYNSRSAQSSPPLNHCTTWNQQHSQYHNTNFP. In terms of domain architecture, Helicase ATP-binding spans 313-477; sequence LKKIHCEQIM…LFDCGILHVN (165 aa). Residue 326 to 333 participates in ATP binding; it reads GETGSGKS. The DEAH box motif lies at 424–427; sequence DEAH. The Helicase C-terminal domain maps to 507-673; the sequence is DVVKMAVEIH…VALLRMLALG (167 aa). The segment at 1557–1764 is TRIAD supradomain; it reads IELECPICLS…EPCYAHLRTI (208 aa). Zn(2+) contacts are provided by cysteine 1561, cysteine 1564, cysteine 1577, histidine 1579, cysteine 1582, cysteine 1585, cysteine 1604, cysteine 1609, cysteine 1649, cysteine 1654, cysteine 1672, cysteine 1675, cysteine 1680, cysteine 1683, histidine 1688, cysteine 1693, cysteine 1719, and cysteine 1722. The RING-type 1 zinc finger occupies 1561 to 1609; the sequence is CPICLSEVDDGYSLEGCSHLFCKACLLEQFEASMRNFDAFPILCSHIDC. The segment at 1628-1693 adopts an IBR-type zinc-finger fold; it reads DELISASLSA…HLEYHPLITC (66 aa). The RING-type 2; atypical zinc finger occupies 1719-1747; it reads CPICKSTIEKTDGCNHLQCRCGKHICWTC. Cysteine 1732 is an active-site residue. Residues cysteine 1737 and cysteine 1739 each contribute to the Zn(2+) site.

It belongs to the DEAD box helicase family. DEAH subfamily.

Its subcellular location is the plastid. It is found in the chloroplast. It carries out the reaction ATP + H2O = ADP + phosphate + H(+). This is ATP-dependent RNA helicase DEAH11, chloroplastic from Arabidopsis thaliana (Mouse-ear cress).